The following is a 486-amino-acid chain: Bifunctional protein HldE (486 aa).

The ribokinase stretch occupies residues Met1–Val331. Asn207–Glu210 is an ATP binding site. Residue Asp276 is part of the active site. A cytidylyltransferase region spans residues Val358 to His486.

In the N-terminal section; belongs to the carbohydrate kinase PfkB family. The protein in the C-terminal section; belongs to the cytidylyltransferase family. Homodimer.

It carries out the reaction D-glycero-beta-D-manno-heptose 7-phosphate + ATP = D-glycero-beta-D-manno-heptose 1,7-bisphosphate + ADP + H(+). The catalysed reaction is D-glycero-beta-D-manno-heptose 1-phosphate + ATP + H(+) = ADP-D-glycero-beta-D-manno-heptose + diphosphate. Its pathway is nucleotide-sugar biosynthesis; ADP-L-glycero-beta-D-manno-heptose biosynthesis; ADP-L-glycero-beta-D-manno-heptose from D-glycero-beta-D-manno-heptose 7-phosphate: step 1/4. It participates in nucleotide-sugar biosynthesis; ADP-L-glycero-beta-D-manno-heptose biosynthesis; ADP-L-glycero-beta-D-manno-heptose from D-glycero-beta-D-manno-heptose 7-phosphate: step 3/4. Functionally, catalyzes the phosphorylation of D-glycero-D-manno-heptose 7-phosphate at the C-1 position to selectively form D-glycero-beta-D-manno-heptose-1,7-bisphosphate. Its function is as follows. Catalyzes the ADP transfer from ATP to D-glycero-beta-D-manno-heptose 1-phosphate, yielding ADP-D-glycero-beta-D-manno-heptose. In Koribacter versatilis (strain Ellin345), this protein is Bifunctional protein HldE.